The chain runs to 452 residues: Mitochondrial import inner membrane translocase subunit TIM50 (452 aa).

Residues Met1 to Tyr23 constitute a mitochondrion transit peptide. Topologically, residues Ser24–Arg167 are mitochondrial matrix. Disordered regions lie at residues Ile96–Ala115 and Glu130–Glu153. Positions Ser131–Ser144 are enriched in low complexity. The helical transmembrane segment at Ile168–Tyr188 threads the bilayer. The Mitochondrial intermembrane portion of the chain corresponds to Gly189–Ala452. The region spanning Tyr243–Ile387 is the FCP1 homology domain.

Belongs to the TIM50 family.

The protein localises to the mitochondrion inner membrane. Its function is as follows. Essential component of the TIM23 complex, a complex that mediates the translocation of transit peptide-containing proteins across the mitochondrial inner membrane. In Caenorhabditis elegans, this protein is Mitochondrial import inner membrane translocase subunit TIM50 (scpl-4).